Reading from the N-terminus, the 410-residue chain is Glycylpeptide N-tetradecanoyltransferase (410 aa).

Residues phenylalanine 30, tryptophan 31, phenylalanine 162, leucine 163, cysteine 164, valine 165, serine 171, arginine 173, leucine 174, and alanine 175 each contribute to the tetradecanoyl-CoA site.

Belongs to the NMT family. As to quaternary structure, heterodimer composed of NMT and AK2; AK2 myristoylation stabilizes the complex.

The protein resides in the cytoplasm. The enzyme catalyses N-terminal glycyl-[protein] + tetradecanoyl-CoA = N-tetradecanoylglycyl-[protein] + CoA + H(+). Its function is as follows. Adds a myristoyl group to the N-terminal glycine residue of certain cellular proteins. Myristoylates adenylate kinase AK2. During the asexual blood stage, may myristoylate proteins such as ARO, CDPK1 and GAP45. Probably by mediating protein myristoylation, plays a role in the assembly of the inner membrane complex during the early stages of schizogony and in the formation of rhoptries in the late stages and thus merozoite egress. The sequence is that of Glycylpeptide N-tetradecanoyltransferase from Plasmodium falciparum (isolate 3D7).